Consider the following 560-residue polypeptide: 2-succinyl-5-enolpyruvyl-6-hydroxy-3-cyclohexene-1-carboxylate synthase (560 aa).

It belongs to the TPP enzyme family. MenD subfamily. In terms of assembly, homodimer. Mg(2+) serves as cofactor. It depends on Mn(2+) as a cofactor. Requires thiamine diphosphate as cofactor.

The enzyme catalyses isochorismate + 2-oxoglutarate + H(+) = 5-enolpyruvoyl-6-hydroxy-2-succinyl-cyclohex-3-ene-1-carboxylate + CO2. Its pathway is quinol/quinone metabolism; 1,4-dihydroxy-2-naphthoate biosynthesis; 1,4-dihydroxy-2-naphthoate from chorismate: step 2/7. The protein operates within quinol/quinone metabolism; menaquinone biosynthesis. Catalyzes the thiamine diphosphate-dependent decarboxylation of 2-oxoglutarate and the subsequent addition of the resulting succinic semialdehyde-thiamine pyrophosphate anion to isochorismate to yield 2-succinyl-5-enolpyruvyl-6-hydroxy-3-cyclohexene-1-carboxylate (SEPHCHC). The polypeptide is 2-succinyl-5-enolpyruvyl-6-hydroxy-3-cyclohexene-1-carboxylate synthase (Pectobacterium carotovorum subsp. carotovorum (strain PC1)).